Here is a 306-residue protein sequence, read N- to C-terminus: uncharacterized protein (306 aa).

A run of 9 helical transmembrane segments spans residues 6–26, 37–57, 67–87, 91–111, 125–145, 148–168, 177–197, 213–233, and 251–271; these read VQIM…FPGI, HLAL…AVLT, IPAI…LLNI, TVSA…SAML, WLGS…AGDF, SMSG…YFVF, GFIP…LVFL, LSIV…LAYV, and ALAL…LSLL. 2 EamA domains span residues 17 to 140 and 160 to 285; these read GLWA…LIAF and FSES…FTYL.

It belongs to the EamA transporter family.

It localises to the cell membrane. This is an uncharacterized protein from Bacillus subtilis (strain 168).